The following is a 1082-amino-acid chain: Carbamoyl phosphate synthase large chain (1082 aa).

Positions 1 to 401 are carboxyphosphate synthetic domain; that stretch reads MPKDKALKKV…ALLKAVRSLE (401 aa). 12 residues coordinate ATP: arginine 129, arginine 169, glycine 175, glycine 176, lysine 208, valine 210, glutamate 215, glycine 241, isoleucine 242, histidine 243, glutamine 284, and glutamate 298. Positions 133 to 327 constitute an ATP-grasp 1 domain; sequence KNMCLEIGEP…IAKVATKVAV (195 aa). 3 residues coordinate Mg(2+): glutamine 284, glutamate 298, and asparagine 300. The Mn(2+) site is built by glutamine 284, glutamate 298, and asparagine 300. The interval 402-561 is oligomerization domain; the sequence is TGVTGMNLPE…YSTYEDEDEA (160 aa). The carbamoyl phosphate synthetic domain stretch occupies residues 562–944; sequence EPQAVRKVVV…ALYKACLSAG (383 aa). Positions 686 to 876 constitute an ATP-grasp 2 domain; it reads DQLVAELGIP…MVNLATRICL (191 aa). Positions 722, 761, 763, 767, 792, 793, 794, 795, 835, and 847 each coordinate ATP. Glutamine 835, glutamate 847, and asparagine 849 together coordinate Mg(2+). Residues glutamine 835, glutamate 847, and asparagine 849 each coordinate Mn(2+). The 138-residue stretch at 945 to 1082 folds into the MGS-like domain; that stretch reads YTLPSSGKAV…PLIPLQEYVS (138 aa). Residues 945–1082 form an allosteric domain region; it reads YTLPSSGKAV…PLIPLQEYVS (138 aa).

This sequence belongs to the CarB family. In terms of assembly, composed of two chains; the small (or glutamine) chain promotes the hydrolysis of glutamine to ammonia, which is used by the large (or ammonia) chain to synthesize carbamoyl phosphate. Tetramer of heterodimers (alpha,beta)4. Mg(2+) serves as cofactor. Mn(2+) is required as a cofactor.

The enzyme catalyses hydrogencarbonate + L-glutamine + 2 ATP + H2O = carbamoyl phosphate + L-glutamate + 2 ADP + phosphate + 2 H(+). It catalyses the reaction hydrogencarbonate + NH4(+) + 2 ATP = carbamoyl phosphate + 2 ADP + phosphate + 2 H(+). It functions in the pathway amino-acid biosynthesis; L-arginine biosynthesis; carbamoyl phosphate from bicarbonate: step 1/1. Its pathway is pyrimidine metabolism; UMP biosynthesis via de novo pathway; (S)-dihydroorotate from bicarbonate: step 1/3. Large subunit of the glutamine-dependent carbamoyl phosphate synthetase (CPSase). CPSase catalyzes the formation of carbamoyl phosphate from the ammonia moiety of glutamine, carbonate, and phosphate donated by ATP, constituting the first step of 2 biosynthetic pathways, one leading to arginine and/or urea and the other to pyrimidine nucleotides. The large subunit (synthetase) binds the substrates ammonia (free or transferred from glutamine from the small subunit), hydrogencarbonate and ATP and carries out an ATP-coupled ligase reaction, activating hydrogencarbonate by forming carboxy phosphate which reacts with ammonia to form carbamoyl phosphate. In Desulforudis audaxviator (strain MP104C), this protein is Carbamoyl phosphate synthase large chain.